We begin with the raw amino-acid sequence, 430 residues long: Palmitoyltransferase ZDHHC11 (430 aa).

The Cytoplasmic portion of the chain corresponds to 1–46 (MTNLNCFGRHRRRTAPHNATGSRSELVAPPIHSRINGWSSPLHSFQ). A helical membrane pass occupies residues 47-67 (FIALLIFSFMAIVAFGIYVPL). At 68 to 76 (LPAPWSYAA) the chain is on the lumenal side. Residues 77–97 (YALIGSAFVLHLFSHVTAVTI) form a helical membrane-spanning segment. The Cytoplasmic portion of the chain corresponds to 98 to 176 (DPADVNVRRR…GGRNYWFFFT (79 aa)). The DHHC domain occupies 129 to 179 (LHCTLCEVDVSPKAKHCSTCNKCIADFDHHCKWLNNCVGGRNYWFFFTAVS). Cys-159 serves as the catalytic S-palmitoyl cysteine intermediate. The helical transmembrane segment at 177–197 (AVSSAVIGVILLIPLVLFVFI) threads the bilayer. At 198–234 (EHYVNPAVLRTAPQFQTVKGNGTWLVFLPVAPVETSS) the chain is on the lumenal side. Residues 235–255 (ISLLVVSFITALLSLAALLLL) form a helical membrane-spanning segment. The Cytoplasmic segment spans residues 256–430 (CHLLCFHIYL…QYLHFKQKMP (175 aa)).

Belongs to the DHHC palmitoyltransferase family.

The protein localises to the endoplasmic reticulum membrane. It carries out the reaction L-cysteinyl-[protein] + hexadecanoyl-CoA = S-hexadecanoyl-L-cysteinyl-[protein] + CoA. In terms of biological role, endoplasmic reticulum-localized palmitoyltransferase that could catalyze the addition of palmitate onto protein substrates. This Danio rerio (Zebrafish) protein is Palmitoyltransferase ZDHHC11.